We begin with the raw amino-acid sequence, 192 residues long: Ubiquitin-conjugating enzyme E2 27 (192 aa).

The UBC core domain maps to 2–150; sequence IDFSRIQKEL…ARYWTETFAK (149 aa). The active-site Glycyl thioester intermediate is C88. The UBA domain occupies 153-192; sequence SLEEKVKRLVEMGFGDAQVRSAIESSGGDENLALEKLCSA.

It belongs to the ubiquitin-conjugating enzyme family. As to expression, expressed in seeds, pistils, siliques, hypocotyls and leaves.

It catalyses the reaction S-ubiquitinyl-[E1 ubiquitin-activating enzyme]-L-cysteine + [E2 ubiquitin-conjugating enzyme]-L-cysteine = [E1 ubiquitin-activating enzyme]-L-cysteine + S-ubiquitinyl-[E2 ubiquitin-conjugating enzyme]-L-cysteine.. Its pathway is protein modification; protein ubiquitination. In terms of biological role, accepts the ubiquitin from the E1 complex and catalyzes its covalent attachment to other proteins. In Arabidopsis thaliana (Mouse-ear cress), this protein is Ubiquitin-conjugating enzyme E2 27 (UBC27).